The sequence spans 373 residues: Mannitol-1-phosphate 5-dehydrogenase (373 aa).

3–14 contacts NAD(+); it reads ALHFGAGNIGRG.

This sequence belongs to the mannitol dehydrogenase family.

The enzyme catalyses D-mannitol 1-phosphate + NAD(+) = beta-D-fructose 6-phosphate + NADH + H(+). In Bacillus pumilus (strain SAFR-032), this protein is Mannitol-1-phosphate 5-dehydrogenase.